A 372-amino-acid chain; its full sequence is NAD(P)H-quinone oxidoreductase subunit 1 (372 aa).

8 consecutive transmembrane segments (helical) span residues 27–47 (MLWLPFPMLLVLVAAVVGVLV), 97–117 (ILFTLGPVLVVVPVILSWLIV), 128–148 (VGVGIFLWISLSSVQPIGLLM), 166–186 (AAQSISYEIPLALAVLAVVMM), 204–224 (VLSWNIWRQPVGFLIFWICAL), 266–286 (VLSALLVSILYLGGWGFPIPV), 308–328 (TVGIVMTVLKAYLLVFIAILL), and 347–367 (FLLPLALVNLLVTAALKLAFP).

The protein belongs to the complex I subunit 1 family. In terms of assembly, NDH-1 is composed of at least 11 different subunits.

The protein resides in the cellular thylakoid membrane. The catalysed reaction is a plastoquinone + NADH + (n+1) H(+)(in) = a plastoquinol + NAD(+) + n H(+)(out). It carries out the reaction a plastoquinone + NADPH + (n+1) H(+)(in) = a plastoquinol + NADP(+) + n H(+)(out). Its function is as follows. NDH-1 shuttles electrons from an unknown electron donor, via FMN and iron-sulfur (Fe-S) centers, to quinones in the respiratory and/or the photosynthetic chain. The immediate electron acceptor for the enzyme in this species is believed to be plastoquinone. Couples the redox reaction to proton translocation, and thus conserves the redox energy in a proton gradient. The sequence is that of NAD(P)H-quinone oxidoreductase subunit 1 from Synechococcus sp. (strain CC9311).